Here is a 1701-residue protein sequence, read N- to C-terminus: Merozoite surface protein 1 (1701 aa).

An N-terminal signal peptide occupies residues 1–19; that stretch reads MKIIFFLCSFLFFIINTQC. Positions 89 to 100 are enriched in gly residues; that stretch reads GSGGSVASGGSG. A disordered region spans residues 89–118; sequence GSGGSVASGGSGNSRRTNPSDNSSDSNTKT. A compositionally biased stretch (low complexity) spans 101–116; the sequence is NSRRTNPSDNSSDSNT. Residues Asn-110 and Asn-239 are each glycosylated (N-linked (GlcNAc...) asparagine). A disordered region spans residues 322-344; sequence DAENPTTGSKPNPLPENKKKEVE. N-linked (GlcNAc...) asparagine glycosylation is found at Asn-470, Asn-536, and Asn-607. Residues 704–739 form a disordered region; the sequence is SETTEDGGHSTHTLSQSGETEVTEETEVTEETVGHT. Residues 724 to 733 show a composition bias toward acidic residues; sequence EVTEETEVTE. Asn-802, Asn-899, Asn-919, Asn-965, Asn-991, Asn-1089, and Asn-1196 each carry an N-linked (GlcNAc...) asparagine glycan. Positions 889–927 are enriched in low complexity; sequence TGTSSTSSPGNTTVNTAQSATHSNSQNQQSNASSTNTQN. The disordered stretch occupies residues 889-936; sequence TGTSSTSSPGNTTVNTAQSATHSNSQNQQSNASSTNTQNGVAVSSGPA. 2 disordered regions span residues 1231 to 1259 and 1451 to 1472; these read PPQPDVTPSPLSVRVSGSSGSTKEETQIP and KEKFPSSPPTTPPSPAKTDEQK. A compositionally biased stretch (polar residues) spans 1245–1259; sequence VSGSSGSTKEETQIP. Over residues 1456–1465 the composition is skewed to pro residues; sequence SSPPTTPPSP. A glycan (N-linked (GlcNAc...) asparagine) is linked at Asn-1588. EGF-like domains are found at residues 1592 to 1632 and 1633 to 1680; these read HQCV…VENP and NPTC…IFCS. 6 cysteine pairs are disulfide-bonded: Cys-1594–Cys-1605, Cys-1599–Cys-1615, Cys-1617–Cys-1628, Cys-1636–Cys-1649, Cys-1643–Cys-1663, and Cys-1665–Cys-1679. Ser-1680 is lipidated: GPI-anchor amidated serine. Positions 1681–1701 are cleaved as a propeptide — removed in mature form; sequence SSNFLGISFLLILMLILYSFI.

As to quaternary structure, forms a complex composed of subunits p83, p30, p38, and p42 which remain non-covalently associated; the complex is formed at the merozoite surface prior to egress from host erythrocytes. Forms a complex composed of processed MSP1 subunits, MSP6 subunit p36 and MSP7; the complex is formed at the merozoite surface prior to egress from host erythrocytes. Within the complex, interacts (via subunit p38) with MSP6 subunit p36 and (via subunits p83, p30 and p38) with MSP7 (via subunit p22). Forms a complex composed of MSP1, MSP6, DBLMSP1 and DBLMSP2. Within the complex, interacts (via subunit p38) with DBLMSP1 and DBLMSP2. Forms a complex composed of MSP1, and rhoptry proteins RhopH3, RAP1 and CLAG9/RhopH3. Within the complex, interacts (via subunits p42 and p19) with RhopH3 (via C-terminus). Forms a complex composed of MSP1, MSP6, MSP7, MSP9 and MSP3; within the complex, MSP6 and MSP9 mediate the binding to the host erythrocyte. Interacts (via subunits p19 and p42) with MSP9; the interaction is direct; MSP1 subunits p19 or p42, and MSP9 form a co-ligand complex that interacts with host SLC4A1/Band 3 protein. May interact with PFD6. Interacts with host spectrin. In terms of assembly, interacts with host glycophorin GYPA in a sialic acid-independent manner. Interacts with host proinflammatory cytokine S100P; the interaction blocks S100P inflammatory and chemotactic activities. As to quaternary structure, interacts with host SLC4A1/Band 3 (via 5ABC region) on the host erythrocyte surface in a sialic acid-independent manner. In terms of processing, the p190 precursor is cleaved by SUB1 prior to merozoite egress into 4 subunits p83, p30, p38, and p42 which remain non-covalently associated. SUB1-mediated proteolytic cleavage occurs in an orderly manner; the first cleavage occurs at the p30/p38 site, followed by cleavage at the p83/p30 site, in the 3D7 strain a second cleavage occurs at the N-terminus of p83, the last cleavage occurs at the p38/p42 site. The order of cleavage is essential for parasite viability. SUB1-mediated processing is essential for merozoite egress. In a second processing step during erythrocyte invasion, p42 is cleaved by SUB2 into p33 and p19; the latter remains attached to the merozoite surface via its GPI-anchor and is endocytosed during the subsequent ring stage.

It is found in the cell membrane. The protein localises to the secreted. Its subcellular location is the vacuole membrane. During the asexual blood stage, involved in merozoite egress from host erythrocytes possibly via its interaction with the host cytoskeleton protein spectrin resulting in the destabilization of the host cytoskeleton and thus leading to erythrocyte cell membrane rupture. Involved in the binding to host erythrocytes and is required for host erythrocyte invasion. Its function is as follows. By binding to host proinflammatory cytokine S100P may interfere with host immune responses. Functionally, involved in merozoite invasion of host erythrocytes. May play a role in the biogenesis and/or function of the food vacuole during the intraerythrocytic development. In Plasmodium falciparum (isolate FC27 / Papua New Guinea), this protein is Merozoite surface protein 1.